The sequence spans 228 residues: Deoxyribose-phosphate aldolase (228 aa).

The active-site Proton donor/acceptor is the Asp96. The active-site Schiff-base intermediate with acetaldehyde is the Lys157. The Proton donor/acceptor role is filled by Lys185.

It belongs to the DeoC/FbaB aldolase family. DeoC type 1 subfamily.

The protein resides in the cytoplasm. It catalyses the reaction 2-deoxy-D-ribose 5-phosphate = D-glyceraldehyde 3-phosphate + acetaldehyde. Its pathway is carbohydrate degradation; 2-deoxy-D-ribose 1-phosphate degradation; D-glyceraldehyde 3-phosphate and acetaldehyde from 2-deoxy-alpha-D-ribose 1-phosphate: step 2/2. In terms of biological role, catalyzes a reversible aldol reaction between acetaldehyde and D-glyceraldehyde 3-phosphate to generate 2-deoxy-D-ribose 5-phosphate. This chain is Deoxyribose-phosphate aldolase, found in Picosynechococcus sp. (strain ATCC 27264 / PCC 7002 / PR-6) (Agmenellum quadruplicatum).